A 400-amino-acid chain; its full sequence is MTDFRTLDDAGPLQGKRVLLRVDLNVPMEGGRVTDATRIERVVPTIREIADAGGRVILLAHFGRPKGKPDPKDSLKPILSTLSEKLGRPVAFGEDCVGEAAASAVAALKDGDVILLENTRYHAGEEKNDPDFAKALAANGDIYVNEAFSAAHRAHASTEALARLLPAYAGRLMQAELDALTKGLEAPARPVIAIVGGAKVSTKIDLLENLVAKVDMLVIGGGMANTFLHAQGKDVGKSLCEKDLAETAKRILAAAKEKNCTIILPVDALVAREFRANAENETVPVDAVPSDAMILDVGASSIATIDGAIEEARTLVWNGPLGAFELTPFDTGTVAVAQHAARRTKAGQLVSVAGGGDTVAALNHAGVGEDFSYVSTAGGAFLEWLEGKELPGVEALRAQG.

Residues 23–25 (DLN), R38, 61–64 (HFGR), R120, and R153 each bind substrate. Residues K203, E325, and 355 to 358 (GGDT) each bind ATP.

This sequence belongs to the phosphoglycerate kinase family. Monomer.

Its subcellular location is the cytoplasm. The enzyme catalyses (2R)-3-phosphoglycerate + ATP = (2R)-3-phospho-glyceroyl phosphate + ADP. It functions in the pathway carbohydrate degradation; glycolysis; pyruvate from D-glyceraldehyde 3-phosphate: step 2/5. The chain is Phosphoglycerate kinase from Methylorubrum extorquens (strain CM4 / NCIMB 13688) (Methylobacterium extorquens).